A 207-amino-acid chain; its full sequence is Uracil phosphoribosyltransferase (207 aa).

Residues Arg77, Arg102, and 129–137 contribute to the 5-phospho-alpha-D-ribose 1-diphosphate site; that span reads DPMLATGGS. Residues Ile192 and 197 to 199 each bind uracil; that span reads GDA. A 5-phospho-alpha-D-ribose 1-diphosphate-binding site is contributed by Asp198.

The protein belongs to the UPRTase family. Requires Mg(2+) as cofactor.

The catalysed reaction is UMP + diphosphate = 5-phospho-alpha-D-ribose 1-diphosphate + uracil. Its pathway is pyrimidine metabolism; UMP biosynthesis via salvage pathway; UMP from uracil: step 1/1. Its activity is regulated as follows. Allosterically activated by GTP. Catalyzes the conversion of uracil and 5-phospho-alpha-D-ribose 1-diphosphate (PRPP) to UMP and diphosphate. The sequence is that of Uracil phosphoribosyltransferase from Mycoplasma capricolum subsp. capricolum (strain California kid / ATCC 27343 / NCTC 10154).